A 318-amino-acid polypeptide reads, in one-letter code: Replication factor C small subunit (318 aa).

43–50 (GPAGTGKT) serves as a coordination point for ATP.

It belongs to the activator 1 small subunits family. RfcS subfamily. As to quaternary structure, heteromultimer composed of small subunits (RfcS) and large subunits (RfcL).

Functionally, part of the RFC clamp loader complex which loads the PCNA sliding clamp onto DNA. In Picrophilus torridus (strain ATCC 700027 / DSM 9790 / JCM 10055 / NBRC 100828 / KAW 2/3), this protein is Replication factor C small subunit.